We begin with the raw amino-acid sequence, 236 residues long: NEP1-interacting protein 1 (236 aa).

The Lumenal, thylakoid segment spans residues 1–44 (MASSRFQSGFCPISSCPSLENFIERIKDACRFTLSAVLGTILSA). The helical transmembrane segment at 45-65 (VLTFFFALVGTLLGALTGALI) threads the bilayer. The Stromal segment spans residues 66 to 78 (GQETESGFIRGAA). Residues 79–99 (VGAISGAVFSIEVFESSLVLW) traverse the membrane as a helical segment. The Lumenal, thylakoid segment spans residues 100 to 104 (KSNES). Residues 105–125 (RFGCLLYLIDVIVSLISGRLV) traverse the membrane as a helical segment. The Stromal segment spans residues 126–236 (RERIGPAMLS…GSCPMCRRDL (111 aa)). The RING-type; atypical zinc finger occupies 191–233 (CSVCLQDFQLGETVRSLPHCHHMFHLPCIDNWLFRHGSCPMCR).

This sequence belongs to the RING-type zinc finger family. NIP subfamily. In terms of assembly, interacts with RPOT2.

It is found in the plastid. Its subcellular location is the chloroplast thylakoid membrane. Intrinsic thylakoid membrane protein that fixes RPOT2 on the stromal side of the thylakoid membrane. In Arabidopsis thaliana (Mouse-ear cress), this protein is NEP1-interacting protein 1 (NIP1).